Consider the following 77-residue polypeptide: Large ribosomal subunit protein uL24 (77 aa).

This sequence belongs to the universal ribosomal protein uL24 family. Part of the 50S ribosomal subunit.

Functionally, one of two assembly initiator proteins, it binds directly to the 5'-end of the 23S rRNA, where it nucleates assembly of the 50S subunit. One of the proteins that surrounds the polypeptide exit tunnel on the outside of the subunit. The sequence is that of Large ribosomal subunit protein uL24 from Campylobacter fetus subsp. fetus (strain 82-40).